The primary structure comprises 374 residues: Chaperone protein DnaJ (374 aa).

Positions 5 to 70 (DYYEVLGVNL…RKRASYDQFG (66 aa)) constitute a J domain. The segment at 133–210 (GLSRTIKVPT…CHGQGRQQQT (78 aa)) adopts a CR-type zinc-finger fold. Zn(2+)-binding residues include Cys-146, Cys-149, Cys-162, Cys-165, Cys-184, Cys-187, Cys-198, and Cys-201. CXXCXGXG motif repeat units lie at residues 146-153 (CKTCNGSG), 162-169 (CPRCNGSG), 184-191 (CSVCRGRG), and 198-205 (CTDCHGQG).

Belongs to the DnaJ family. Homodimer. It depends on Zn(2+) as a cofactor.

The protein localises to the cytoplasm. In terms of biological role, participates actively in the response to hyperosmotic and heat shock by preventing the aggregation of stress-denatured proteins and by disaggregating proteins, also in an autonomous, DnaK-independent fashion. Unfolded proteins bind initially to DnaJ; upon interaction with the DnaJ-bound protein, DnaK hydrolyzes its bound ATP, resulting in the formation of a stable complex. GrpE releases ADP from DnaK; ATP binding to DnaK triggers the release of the substrate protein, thus completing the reaction cycle. Several rounds of ATP-dependent interactions between DnaJ, DnaK and GrpE are required for fully efficient folding. Also involved, together with DnaK and GrpE, in the DNA replication of plasmids through activation of initiation proteins. This is Chaperone protein DnaJ from Coxiella burnetii (strain RSA 493 / Nine Mile phase I).